We begin with the raw amino-acid sequence, 432 residues long: Putative D-alanyl-D-alanine carboxypeptidase (432 aa).

Residues 7–25 traverse the membrane as a helical; Signal-anchor segment; sequence ATVLLTFSLSAFAVEYPVL.

The protein belongs to the peptidase S12 family. YfeW subfamily.

Its subcellular location is the cell inner membrane. It catalyses the reaction Preferential cleavage: (Ac)2-L-Lys-D-Ala-|-D-Ala. Also transpeptidation of peptidyl-alanyl moieties that are N-acyl substituents of D-alanine.. The protein is Putative D-alanyl-D-alanine carboxypeptidase of Salmonella typhimurium (strain LT2 / SGSC1412 / ATCC 700720).